A 1130-amino-acid polypeptide reads, in one-letter code: Tyrosine-protein kinase ABL1 (1130 aa).

Residues 1 to 60 (MLEICLKLVGCKSKKGLSSSSSCYLEEALQRPVASDFEPQGLSEAARWNSKENLLAGPSE) are CAP. Leu-2 is lipidated: N-myristoyl glycine. Residue Ser-50 is modified to Phosphoserine. An SH3 domain is found at 61-121 (NDPNLFVALY…PSNYITPVNS (61 aa)). A Phosphotyrosine; by autocatalysis modification is found at Tyr-70. 6 positions are modified to phosphotyrosine: Tyr-115, Tyr-128, Tyr-139, Tyr-172, Tyr-185, and Tyr-215. The SH2 domain occupies 127–217 (WYHGPVSRNA…GLITTLHYPA (91 aa)). A Phosphotyrosine; by autocatalysis modification is found at Tyr-226. Residue Ser-229 is modified to Phosphoserine. Residues 242–493 (ITMKHKLGGG…PSFAEIHQAF (252 aa)) enclose the Protein kinase domain. Position 248-256 (248-256 (LGGGQYGEV)) interacts with ATP. Tyr-253 and Tyr-257 each carry phosphotyrosine. ATP-binding positions include Lys-271 and 316–322 (EFMTYGN). Residue Asp-363 is the Proton acceptor of the active site. Positions 381-405 (DFGLSRLMTGDTYTAHAGAKFPIKW) match the Kinase activation loop motif. Position 393 is a phosphotyrosine; by autocatalysis and SRC-type Tyr-kinases (Tyr-393). A Phosphotyrosine modification is found at Tyr-413. Phosphoserine occurs at positions 446, 559, and 569. Positions 518–996 (AVSTLLQAPE…SASSALAGDQ (479 aa)) are disordered. Basic and acidic residues predominate over residues 537 to 566 (RAAEHRDTTDVPEMPHSKGQGESDPLDHEP). A compositionally biased stretch (basic and acidic residues) spans 586–597 (EDERLLPKDKKT). The Nuclear localization signal 1 signature appears at 605–609 (KKKKK). A phosphoserine; by PAK2 mark is found at Ser-618 and Ser-619. Ser-620, Ser-659, and Ser-683 each carry phosphoserine. Over residues 620-640 (SFREMDGQPERRGAGEEEGRD) the composition is skewed to basic and acidic residues. Positions 689-698 (KSSTLTSSRL) are enriched in polar residues. A Nuclear localization signal 2 motif is present at residues 709–715 (SSKRFLR). An N6-acetyllysine; by EP300 modification is found at Lys-711. A Phosphoserine modification is found at Ser-718. Residues Thr-735 and Thr-751 each carry the phosphothreonine modification. The segment covering 740–752 (LQSTGRQFDSSTF) has biased composition (polar residues). The span at 755–774 (HKSEKPALPRKRAGENRSDQ) shows a compositional bias: basic and acidic residues. The Nuclear localization signal 3 motif lies at 762–769 (LPRKRAGE). At Thr-781 the chain carries Phosphothreonine. Residues 788–802 (KKNEEAADEVFKDIM) are compositionally biased toward basic and acidic residues. Residues Thr-814, Thr-823, Thr-844, and Thr-852 each carry the phosphothreonine modification. Ser-855 carries the phosphoserine modification. The tract at residues 869–968 (PAEESRVRRH…VLPATPKPQS (100 aa)) is DNA-binding. The segment covering 881-891 (SSESPGRDKGK) has biased composition (basic and acidic residues). The segment covering 905-915 (ASAGKAGGKPS) has biased composition (low complexity). At Ser-917 the chain carries Phosphoserine. The segment at 953 to 1130 (EGLKKPVLPA…VKEISDIVQR (178 aa)) is F-actin-binding. A compositionally biased stretch (polar residues) spans 965–975 (KPQSAKPSGTP). Position 977 is a phosphoserine (Ser-977). Low complexity predominate over residues 984–993 (TLPSASSALA). The Nuclear export signal motif lies at 1090–1100 (LENNLRELQIC).

Belongs to the protein kinase superfamily. Tyr protein kinase family. ABL subfamily. As to quaternary structure, interacts with SORBS1 following insulin stimulation. Found in a trimolecular complex containing CDK5 and CABLES1. Interacts with CABLES1 and PSTPIP1. Interacts with ZDHHC16, ITGB1 and HCK. Interacts with STX17; probably phosphorylates STX17. Interacts with INPPL1/SHIP2. Interacts with the 14-3-3 proteins, YWHAB, YWHAE, YWHAG, YWHAH, SFN and YWHAZ; the interaction with 14-3-3 proteins requires phosphorylation on Thr-735 and, sequesters ABL1 into the cytoplasm. Interacts with ABI1, ABI2, BCR, CRK, FGR, FYN, HCK, LYN, PSMA7 RAD9A, RAD51, RAD52, TP73 and WASF3. A complex made of ABL1, CTTN and MYLK regulates cortical actin-based cytoskeletal rearrangement critical to sphingosine 1-phosphate (S1P)-mediated endothelial cell (EC) barrier enhancement. Interacts (via SH3 domain) with CASP9; the interaction is direct and increases in the response of cells to genotoxic stress and ABL1/c-Abl activation. Found in a complex with ABL1, ABL2, CRK and UNC119; leading to the inhibition of CRK phosphorylation by ABL kinases. Interacts with TBX21. Interacts with NEDD9/HEF1; interaction is induced by CXCL12 promotion of ABL-mediated phosphorylation of NEDD9/HEF1. The cofactor is Mg(2+). Acetylated at Lys-711 by EP300 which promotes the cytoplasmic translocation. In terms of processing, phosphorylation at Tyr-70 by members of the SRC family of kinases disrupts SH3 domain-based autoinhibitory interactions and intermolecular associations, such as that with ABI1, and also enhances kinase activity. Phosphorylation at Tyr-226 and Tyr-393 correlate with increased activity. DNA damage-induced activation of ABL1 requires the function of ATM and Ser-446 phosphorylation. Phosphorylation at Ser-569 has been attributed to a CDC2-associated kinase and is coupled to cell division. Phosphorylation at Ser-618 and Ser-619 by PAK2 increases binding to CRK and reduces binding to ABI1. Phosphorylation on Thr-735 is required for binding 14-3-3 proteins for cytoplasmic translocation. Phosphorylated by PRKDC. Post-translationally, polyubiquitinated. Polyubiquitination of ABL1 leads to degradation. In terms of tissue distribution, widely expressed.

It localises to the cytoplasm. It is found in the cytoskeleton. The protein resides in the nucleus. Its subcellular location is the mitochondrion. The protein localises to the nucleus membrane. The catalysed reaction is L-tyrosyl-[protein] + ATP = O-phospho-L-tyrosyl-[protein] + ADP + H(+). With respect to regulation, stabilized in the inactive form by an association between the SH3 domain and the SH2-TK linker region, interactions of the N-terminal cap, and contributions from an N-terminal myristoyl group and phospholipids. Activated by autophosphorylation as well as by SRC-family kinase-mediated phosphorylation. Activated by RIN1 binding to the SH2 and SH3 domains. Also stimulated by cell death inducers and DNA-damage. Phosphatidylinositol 4,5-bisphosphate (PIP2), a highly abundant phosphoinositide known to regulate cytoskeletal and membrane proteins, also inhibits the tyrosine kinase activity. Activated by 5-(1,3-diaryl-1H-pyrazol-4-yl)hydantoin, 5-[3-(4-fluorophenyl)-1-phenyl-1H-pyrazol-4-yl]-2,4-imidazolidinedione (DPH). Inhibited by ABI1, whose activity is controlled by ABL1 itself through tyrosine phosphorylation. Also inhibited by imatinib mesylate (Gleevec) which is used for the treatment of chronic myeloid leukemia (CML), and by VX-680, an inhibitor that also acts on imatinib-resistant mutants. Its function is as follows. Non-receptor tyrosine-protein kinase that plays a role in many key processes linked to cell growth and survival such as cytoskeleton remodeling in response to extracellular stimuli, cell motility and adhesion, receptor endocytosis, autophagy, DNA damage response and apoptosis. Coordinates actin remodeling through tyrosine phosphorylation of proteins controlling cytoskeleton dynamics like WASF3 (involved in branch formation); ANXA1 (involved in membrane anchoring); DBN1, DBNL, CTTN, RAPH1 and ENAH (involved in signaling); or MAPT and PXN (microtubule-binding proteins). Phosphorylation of WASF3 is critical for the stimulation of lamellipodia formation and cell migration. Involved in the regulation of cell adhesion and motility through phosphorylation of key regulators of these processes such as BCAR1, CRK, CRKL, DOK1, EFS or NEDD9. Phosphorylates multiple receptor tyrosine kinases and more particularly promotes endocytosis of EGFR, facilitates the formation of neuromuscular synapses through MUSK, inhibits PDGFRB-mediated chemotaxis and modulates the endocytosis of activated B-cell receptor complexes. Other substrates which are involved in endocytosis regulation are the caveolin (CAV1) and RIN1. Moreover, ABL1 regulates the CBL family of ubiquitin ligases that drive receptor down-regulation and actin remodeling. Phosphorylation of CBL leads to increased EGFR stability. Involved in late-stage autophagy by regulating positively the trafficking and function of lysosomal components. ABL1 targets to mitochondria in response to oxidative stress and thereby mediates mitochondrial dysfunction and cell death. In response to oxidative stress, phosphorylates serine/threonine kinase PRKD2 at 'Tyr-717'. ABL1 is also translocated in the nucleus where it has DNA-binding activity and is involved in DNA-damage response and apoptosis. Many substrates are known mediators of DNA repair: DDB1, DDB2, ERCC3, ERCC6, RAD9A, RAD51, RAD52 or WRN. Activates the proapoptotic pathway when the DNA damage is too severe to be repaired. Phosphorylates TP73, a primary regulator for this type of damage-induced apoptosis. Phosphorylates the caspase CASP9 on 'Tyr-153' and regulates its processing in the apoptotic response to DNA damage. Phosphorylates PSMA7 that leads to an inhibition of proteasomal activity and cell cycle transition blocks. ABL1 also acts as a regulator of multiple pathological signaling cascades during infection. Several known tyrosine-phosphorylated microbial proteins have been identified as ABL1 substrates. This is the case of A36R of Vaccinia virus, Tir (translocated intimin receptor) of pathogenic E.coli and possibly Citrobacter, CagA (cytotoxin-associated gene A) of H.pylori, or AnkA (ankyrin repeat-containing protein A) of A.phagocytophilum. Pathogens can highjack ABL1 kinase signaling to reorganize the host actin cytoskeleton for multiple purposes, like facilitating intracellular movement and host cell exit. Finally, functions as its own regulator through autocatalytic activity as well as through phosphorylation of its inhibitor, ABI1. Regulates T-cell differentiation in a TBX21-dependent manner. Positively regulates chemokine-mediated T-cell migration, polarization, and homing to lymph nodes and immune-challenged tissues, potentially via activation of NEDD9/HEF1 and RAP1. Phosphorylates TBX21 on tyrosine residues leading to an enhancement of its transcriptional activator activity. In Homo sapiens (Human), this protein is Tyrosine-protein kinase ABL1 (ABL1).